We begin with the raw amino-acid sequence, 378 residues long: MNKPLRNSHPLFKIANNALVDLPAPINISSWWNFGSLLGLCLIIQILTGLFLAMHYTADINLAFYSVNHICRDVNYGWLLRTLHANGASFFFICIYLHVGRGMYYGSYMFTPTWLIGVIILFLVMGTAFMGYVLPWGQMSFWGATVITNLLSAIPYLGMDLVQWLWGGFAVDNATLTRFFTFHFILPFIVLAMTMIHLLFLHQTGSNNPIGLNSNIDKIPFHPYFTFKDIVGFIVMIFILISLVLISPNLLGDPDNFIPANPLVTPAHIQPEWYFLFAYAILRSIPNKLGGVIALVLSIAILMILPFYNLSKFRGIQFYPINQVMFWSMLVTVILLTWIGARPVEEPYVLIGQILTVVYFLYYLVNPLITKWWDNLLN.

4 consecutive transmembrane segments (helical) span residues 34–54 (FGSL…FLAM), 78–99 (WLLR…YLHV), 114–134 (WLIG…GYVL), and 179–199 (FFTF…IHLL). Residues His84 and His98 each contribute to the heme b site. The heme b site is built by His183 and His197. His202 serves as a coordination point for a ubiquinone. 4 consecutive transmembrane segments (helical) span residues 227 to 247 (FKDI…VLIS), 289 to 309 (LGGV…PFYN), 321 to 341 (INQV…WIGA), and 348 to 368 (YVLI…VNPL).

Belongs to the cytochrome b family. The main subunits of complex b-c1 are: cytochrome b, cytochrome c1 and the Rieske protein. Heme b is required as a cofactor.

Its subcellular location is the mitochondrion inner membrane. Its function is as follows. Component of the ubiquinol-cytochrome c reductase complex (complex III or cytochrome b-c1 complex) that is part of the mitochondrial respiratory chain. The b-c1 complex mediates electron transfer from ubiquinol to cytochrome c. Contributes to the generation of a proton gradient across the mitochondrial membrane that is then used for ATP synthesis. This Drosophila mauritiana (Fruit fly) protein is Cytochrome b (mt:Cyt-b).